The sequence spans 620 residues: EF-hand calcium-binding domain-containing protein 7 (620 aa).

The tract at residues 1-24 (MANHSSLPSQKYAASERQEYQKPQ) is disordered. EF-hand domains lie at 98-133 (ATKN…KGEK) and 134-169 (MSQE…TCEQ). The interval 176-234 (ERMDSNSKAKRQQFGSYIEKSPERSSSPKSSHGNLKLFDSETSTRKENKSSRPSSARSY) is disordered. Positions 213-225 (FDSETSTRKENKS) are enriched in basic and acidic residues. Positions 394-429 (EFKSALSDMFDIIDLDGNGLLSLAEYNFFEMRTSGE) constitute an EF-hand 3 domain. Residues Asp407, Asp409, Asn411, and Glu418 each contribute to the Ca(2+) site.

The protein localises to the cell projection. It is found in the cilium membrane. In terms of biological role, plays a role in the ciliary Hedgehog (Hh) signaling. The chain is EF-hand calcium-binding domain-containing protein 7 (efcab7) from Xenopus laevis (African clawed frog).